Consider the following 357-residue polypeptide: Glycerol-3-phosphate dehydrogenase [NAD(P)+] (357 aa).

The NADPH site is built by Ser30, Phe31, Arg51, and Lys124. 2 residues coordinate sn-glycerol 3-phosphate: Lys124 and Gly152. Ala156 provides a ligand contact to NADPH. 5 residues coordinate sn-glycerol 3-phosphate: Lys207, Asp260, Ser270, Arg271, and Asn272. The Proton acceptor role is filled by Lys207. Arg271 lines the NADPH pocket. Residue Glu297 coordinates NADPH.

This sequence belongs to the NAD-dependent glycerol-3-phosphate dehydrogenase family.

The protein localises to the cytoplasm. It catalyses the reaction sn-glycerol 3-phosphate + NAD(+) = dihydroxyacetone phosphate + NADH + H(+). The catalysed reaction is sn-glycerol 3-phosphate + NADP(+) = dihydroxyacetone phosphate + NADPH + H(+). It functions in the pathway membrane lipid metabolism; glycerophospholipid metabolism. Functionally, catalyzes the reduction of the glycolytic intermediate dihydroxyacetone phosphate (DHAP) to sn-glycerol 3-phosphate (G3P), the key precursor for phospholipid synthesis. This chain is Glycerol-3-phosphate dehydrogenase [NAD(P)+], found in Acinetobacter baumannii (strain AB307-0294).